The following is a 108-amino-acid chain: UPF0060 membrane protein CJA_3703 (108 aa).

4 helical membrane passes run 6–26 (LLFVVTALAEIIGCFLPYLWL), 31–51 (SIWLLLPAALSLALFAWLLTL), 61–81 (AAYGGVYVAVALLWLYWVDGV), and 85–105 (AYDWAGAAVALLGMAIIAMGW).

The protein belongs to the UPF0060 family.

It localises to the cell inner membrane. The protein is UPF0060 membrane protein CJA_3703 of Cellvibrio japonicus (strain Ueda107) (Pseudomonas fluorescens subsp. cellulosa).